Reading from the N-terminus, the 37-residue chain is Large ribosomal subunit protein bL36 (37 aa).

The protein belongs to the bacterial ribosomal protein bL36 family.

The chain is Large ribosomal subunit protein bL36 from Metamycoplasma arthritidis (strain 158L3-1) (Mycoplasma arthritidis).